The following is a 602-amino-acid chain: UvrABC system protein C (602 aa).

The region spanning 17-94 (KTSGCYKMYS…IKKYKPTYNI (78 aa)) is the GIY-YIG domain. Residues 199 to 234 (SKLLNDIEIKMKEVIMKENFEAAIKLKETKKSLIEI) enclose the UVR domain.

The protein belongs to the UvrC family. In terms of assembly, interacts with UvrB in an incision complex.

Its subcellular location is the cytoplasm. In terms of biological role, the UvrABC repair system catalyzes the recognition and processing of DNA lesions. UvrC both incises the 5' and 3' sides of the lesion. The N-terminal half is responsible for the 3' incision and the C-terminal half is responsible for the 5' incision. This is UvrABC system protein C from Borrelia duttonii (strain Ly).